Here is a 532-residue protein sequence, read N- to C-terminus: Muscarinic acetylcholine receptor M5 (532 aa).

The Extracellular segment spans residues 1–29 (MEGDSYHNATTVNGTPVNHQPLERHRLWE). Asn-8 is a glycosylation site (N-linked (GlcNAc...) asparagine). Residues 30–53 (VITIAAVTAVVSLITIVGNVLVMI) traverse the membrane as a helical segment. Residues 54–66 (SFKVNSQLKTVNN) lie on the Cytoplasmic side of the membrane. Residues 67 to 87 (YYLLSLACADLIIGIFSMNLY) form a helical membrane-spanning segment. The Extracellular segment spans residues 88–104 (TTYILMGRWALGSLACD). Cys-103 and Cys-183 are joined by a disulfide. Residues 105–126 (LWLALDYVASNASVMNLLVISF) traverse the membrane as a helical segment. Topologically, residues 127-146 (DRYFSITRPLTYRAKRTPKR) are cytoplasmic. The helical transmembrane segment at 147–169 (AGIMIGLAWLISFILWAPAILCW) threads the bilayer. The Extracellular segment spans residues 170-191 (QYLVGKRTVPLDECQIQFLSEP). Residues 192-214 (TITFGTAIAAFYIPVSVMTILYC) form a helical membrane-spanning segment. The Cytoplasmic segment spans residues 215–443 (RIYRETEKRT…LVKERKAAQT (229 aa)). The disordered stretch occupies residues 262–294 (AQRERNQASWSSSRRSTSTTGKPSQATGPSANW). A compositionally biased stretch (low complexity) spans 270–281 (SWSSSRRSTSTT). Residues 282 to 291 (GKPSQATGPS) show a composition bias toward polar residues. The helical transmembrane segment at 444–464 (LSAILLAFIITWTPYNIMVLV) threads the bilayer. The Extracellular portion of the chain corresponds to 465–478 (STFCDKCVPVTLWH). A helical membrane pass occupies residues 479 to 498 (LGYWLCYVNSTVNPICYALC). Residues 499 to 532 (NRTFRKTFKMLLLCRWKKKKVEEKLYWQGNSKLP) lie on the Cytoplasmic side of the membrane. Phosphothreonine is present on residues Thr-501 and Thr-505.

It belongs to the G-protein coupled receptor 1 family. Muscarinic acetylcholine receptor subfamily. CHRM5 sub-subfamily.

The protein localises to the cell membrane. It is found in the postsynaptic cell membrane. The muscarinic acetylcholine receptor mediates various cellular responses, including inhibition of adenylate cyclase, breakdown of phosphoinositides and modulation of potassium channels through the action of G proteins. Primary transducing effect is Pi turnover. The chain is Muscarinic acetylcholine receptor M5 (CHRM5) from Homo sapiens (Human).